The chain runs to 144 residues: Small ribosomal subunit protein bS6 (144 aa).

Residues 92-144 are disordered; sequence KVDGHDEGPSVQMQKRDDRGDREERGDRGDRGDRGPRGDRGPREDRGPRPERR. Residues 93–144 are compositionally biased toward basic and acidic residues; sequence VDGHDEGPSVQMQKRDDRGDREERGDRGDRGDRGPRGDRGPREDRGPRPERR.

It belongs to the bacterial ribosomal protein bS6 family.

Functionally, binds together with bS18 to 16S ribosomal RNA. The polypeptide is Small ribosomal subunit protein bS6 (rpsF) (Rhodobacter capsulatus (strain ATCC BAA-309 / NBRC 16581 / SB1003)).